The sequence spans 297 residues: MATTSVSSPKSKPSWVSFLSGGLAGVTAKSAVAPLERVKILYQIKSELYSLNSVYGSMLKIVENEGIKGLWRGNSATILRVFPYAAVQFLSYETIKNHLVADKSSSFQIFLAGSAAGGIAVCATYPLDLLRARLAIEIHKKPTKPHHLLKSTFTKDGVKGIYRGIQPTLIGILPYGGISFSTFEFLKRIAPLNEIDENGQISGTYKLIAGGIAGGVAQTVAYPFDVVRRRVQTHGFGDAKAVVNLEHGTLRTIAHILKEEGILALYKGLSINYVKVIPTASIAFYTYEYLSNFFNKL.

Solcar repeat units follow at residues 12–98, 104–189, and 201–293; these read KPSW…IKNH, SSSF…LKRI, and ISGT…LSNF. 6 helical membrane passes run 15–35, 66–86, 107–127, 165–185, 207–227, and 262–282; these read WVSFLSGGLAGVTAKSAVAPL, GIKGLWRGNSATILRVFPYAA, FQIFLAGSAAGGIAVCATYPL, IQPTLIGILPYGGISFSTFEF, LIAGGIAGGVAQTVAYPFDVV, and ILALYKGLSINYVKVIPTASI.

The protein belongs to the mitochondrial carrier (TC 2.A.29) family.

Its subcellular location is the mitochondrion inner membrane. Functionally, mitochondrial solute carriers shuttle metabolites, nucleotides, and cofactors through the mitochondrial inner membrane. Required for the accumulation of coenzyme A in the mitochondrial matrix. The sequence is that of Mitochondrial substrate carrier family protein P (mcfP) from Dictyostelium discoideum (Social amoeba).